The chain runs to 392 residues: MTIRNQRLSLLKQPISSTLNQHLIDYPTPSNLSYWWGFGSLAGICLVIQIVTGVFLAMHYTPHVDLAFNSVEHVMRDVEGGWLLRYMHANGASMFLIVVHLHIFRGLYHASYSSPREFVRCLGVVIFLLMIVTAFTGYVPPWGQMSFWGATVITSLASAIPVVGDTIVTWLWGGFSVDNATLNRFFSLHHLLPFILVGASLLHLAALHQYGSNNPLGVHSEMDQISFYPYFYVKDLVGWVAFAIFFSIWIFYAPNVLGHPDNYIPANPMPTPPHIVPEWYFLPIHAILRSIPDKSGGVAAIAPVFICLLALPFFKSMYVRSSSFRPIHQGIFWLLLADRLLLGWIGCQPVEAPFVTIGQIPPFVFFLFFAITPIPGRVGRGIPNSYTDETDQ.

4 helical membrane passes run 38–58 (FGSL…FLAM), 82–104 (WLLR…LHIF), 119–139 (VRCL…TGYV), and 185–205 (FFSL…LHLA). Residues His-88 and His-102 each contribute to the heme b site. Heme b contacts are provided by His-189 and His-203. An a ubiquinone-binding site is contributed by His-208. The next 4 membrane-spanning stretches (helical) occupy residues 231-251 (FYVK…IWIF), 295-315 (SGGV…PFFK), 327-347 (IHQG…WIGC), and 354-373 (FVTI…AITP).

Belongs to the cytochrome b family. The main subunits of complex b-c1 are: cytochrome b, cytochrome c1 and the Rieske protein. Requires heme b as cofactor.

It is found in the mitochondrion inner membrane. Component of the ubiquinol-cytochrome c reductase complex (complex III or cytochrome b-c1 complex) that is part of the mitochondrial respiratory chain. The b-c1 complex mediates electron transfer from ubiquinol to cytochrome c. Contributes to the generation of a proton gradient across the mitochondrial membrane that is then used for ATP synthesis. In Vicia faba (Broad bean), this protein is Cytochrome b (MT-CYB).